A 445-amino-acid polypeptide reads, in one-letter code: UPF0210 protein SUB1511 (445 aa).

The protein belongs to the UPF0210 family. In terms of assembly, homodimer.

The sequence is that of UPF0210 protein SUB1511 from Streptococcus uberis (strain ATCC BAA-854 / 0140J).